Consider the following 135-residue polypeptide: Methylglyoxal synthase (135 aa).

The MGS-like domain occupies 1–135 (MPKRRRIALI…AQPDPKEIHA (135 aa)). Residues H12, K16, 38–41 (TGTT), and 58–59 (SG) each bind substrate. The Proton donor/acceptor role is filled by D64. A substrate-binding site is contributed by H91.

Belongs to the methylglyoxal synthase family.

It carries out the reaction dihydroxyacetone phosphate = methylglyoxal + phosphate. Functionally, catalyzes the formation of methylglyoxal from dihydroxyacetone phosphate. In Ralstonia nicotianae (strain ATCC BAA-1114 / GMI1000) (Ralstonia solanacearum), this protein is Methylglyoxal synthase.